We begin with the raw amino-acid sequence, 122 residues long: uncharacterized protein (122 aa).

2 consecutive transmembrane segments (helical) span residues 36 to 56 (SVRS…YSQF) and 72 to 92 (AVFL…FSTD).

The protein resides in the membrane. This is an uncharacterized protein from Saccharomyces cerevisiae (strain ATCC 204508 / S288c) (Baker's yeast).